The sequence spans 403 residues: Acetyl-CoA acetyltransferase IB (403 aa).

Catalysis depends on C91, which acts as the Acyl-thioester intermediate. Active-site proton acceptor residues include H353 and C383. A Microbody targeting signal motif is present at residues 401–403; sequence AKL.

It belongs to the thiolase-like superfamily. Thiolase family. As to quaternary structure, multimeric.

The protein resides in the peroxisome. It carries out the reaction 2 acetyl-CoA = acetoacetyl-CoA + CoA. Its pathway is metabolic intermediate biosynthesis; (R)-mevalonate biosynthesis; (R)-mevalonate from acetyl-CoA: step 1/3. The sequence is that of Acetyl-CoA acetyltransferase IB (PACTB) from Candida tropicalis (Yeast).